The following is a 127-amino-acid chain: RxLR effector protein SFI3 (127 aa).

Residues M1 to A20 form the signal peptide. Residues R40–R62 carry the RxLR-dEER motif. The tract at residues W72 to Y107 is WY-domain.

This sequence belongs to the RxLR effector family. Forms an unusual trans-homodimer. Interacts with host UBK.

It localises to the secreted. The protein resides in the host nucleus. It is found in the host nucleolus. Functionally, effector that suppresses flg22-induced post-translational MAP kinase activation in potato and tomato, but not in Arabidopsis. The perception of highly conserved pathogen- or microbe-associated molecular patterns (PAMPs/MAMPs), such as flg22, triggers converging signaling pathways recruiting MAP kinase cascades and inducing transcriptional re-programming, yielding a generic antimicrobial response. Does not suppress programmed cell death triggered by the P.infestans elicitin infestin-1 (INF1), or by co-expression of tomato Cf4 with Cladosporium fulvum Avr4. Suppresses early pattern-triggered immunity (PTI) via interaction with the U-box-kinase protein UBK, a positive regulator of specific PTI pathways in both potato and Nicotiana benthamiana. In Phytophthora infestans (strain T30-4) (Potato late blight agent), this protein is RxLR effector protein SFI3.